The sequence spans 195 residues: UPF0215 protein TK2033 (195 aa).

It belongs to the UPF0215 family.

The chain is UPF0215 protein TK2033 from Thermococcus kodakarensis (strain ATCC BAA-918 / JCM 12380 / KOD1) (Pyrococcus kodakaraensis (strain KOD1)).